Consider the following 371-residue polypeptide: DNA replication and repair protein RecF (371 aa).

30-37 (GQNGSGKT) serves as a coordination point for ATP.

It belongs to the RecF family.

The protein localises to the cytoplasm. Its function is as follows. The RecF protein is involved in DNA metabolism; it is required for DNA replication and normal SOS inducibility. RecF binds preferentially to single-stranded, linear DNA. It also seems to bind ATP. The protein is DNA replication and repair protein RecF of Chlorobium phaeovibrioides (strain DSM 265 / 1930) (Prosthecochloris vibrioformis (strain DSM 265)).